The chain runs to 199 residues: Type-4 uracil-DNA glycosylase (199 aa).

Residues C14 and C17 each contribute to the [4Fe-4S] cluster site. Uracil-binding positions include 41-43, F55, and N81; that span reads GEA. Positions 77 to 114 are pseudo-FCL; that stretch reads VYITNVLKCRPPNNRDPTPEEVEKCGDYLVRQLEAIRP. [4Fe-4S] cluster-binding residues include C85 and C101. H163 serves as a coordination point for uracil.

Belongs to the uracil-DNA glycosylase (UDG) superfamily. Type 4 (UDGa) family.

The catalysed reaction is Hydrolyzes single-stranded DNA or mismatched double-stranded DNA and polynucleotides, releasing free uracil.. Its activity is regulated as follows. Product-inhibited by both uracil and apurinic/apyrimidinic sites. Its function is as follows. Removes uracil bases that are present in DNA as a result of either deamination of cytosine or misincorporation of dUMP instead of dTMP. Can remove uracil from double-stranded DNA containing either a U/G or U/A base pair as well as from single-stranded DNA. The chain is Type-4 uracil-DNA glycosylase from Archaeoglobus fulgidus (strain ATCC 49558 / DSM 4304 / JCM 9628 / NBRC 100126 / VC-16).